The sequence spans 213 residues: Sclerostin (213 aa).

Positions 1–23 are cleaved as a signal peptide; sequence MQLPLALCLVCLLVHAAFRVVEG. The disordered stretch occupies residues 41-71; sequence GEYPEPPPELENNKTMNRAENGGRPPHHPFE. Residue Asn53 is glycosylated (N-linked (GlcNAc...) asparagine). Intrachain disulfides connect Cys80–Cys134, Cys94–Cys148, Cys105–Cys165, and Cys109–Cys167. The 91-residue stretch at 82–172 folds into the CTCK domain; the sequence is ELHFTRYVTD…ASCKCKRLTR (91 aa). N-linked (GlcNAc...) asparagine glycosylation occurs at Asn175. The segment at 178-213 is disordered; that stretch reads ELKDFGPEAARPQKGRKPRPRARGAKANQAELENAY. Positions 190–201 are enriched in basic residues; the sequence is QKGRKPRPRARG.

This sequence belongs to the sclerostin family. Interacts with LRP4 (via the extracellular domain); the interaction facilitates the inhibition of Wnt signaling. Interacts with LRP5 (via the first two YWTD-EGF repeat domains); the interaction inhibits Wnt-mediated signaling. Interacts with LRP6.

The protein localises to the secreted. It localises to the extracellular space. It is found in the extracellular matrix. In terms of biological role, negative regulator of bone growth that acts through inhibition of Wnt signaling and bone formation. This chain is Sclerostin, found in Chlorocebus aethiops (Green monkey).